Reading from the N-terminus, the 290-residue chain is MDIRQLRYFITIAQEQKITSAAKKLHMAQPPLSRQLKQLEDELGVVLFDRNKKKQMTLTYEGAVFLKRAKEILHRFEDAVIEVQELKEEVAGTLAVGSTIYCAALMLEKVTQIKERYPHLTFNIWENEPATLLELLESRQIDAAVTTTLIKSDTVQFKQLDDIPCVLVLSDEAGYPCGDTIKMVDIPSFPLILLRPVNGKGVYNQVMNEFHRLNLEPRIVCECHDSATLLSLVSSGFGASILPVTMIPVHMRNHVHTVHIENNPFIMTPAVMWRTDSYLPKPAQQFLDLF.

An HTH lysR-type domain is found at 1–59; it reads MDIRQLRYFITIAQEQKITSAAKKLHMAQPPLSRQLKQLEDELGVVLFDRNKKKQMTLT. Residues 18–37 constitute a DNA-binding region (H-T-H motif); it reads ITSAAKKLHMAQPPLSRQLK.

It belongs to the LysR transcriptional regulatory family.

Functionally, could be a positive regulator of bsdBCD expression in response to salicylic acid. In Bacillus subtilis (strain 168), this protein is HTH-type transcriptional regulator BsdA (bsdA).